The following is a 379-amino-acid chain: Homoserine O-succinyltransferase (379 aa).

The AB hydrolase-1 domain maps to 51–360; that stretch reads NAVLICHALS…DSPYGHDAFL (310 aa). Ser157 functions as the Nucleophile in the catalytic mechanism. Arg227 lines the substrate pocket. Catalysis depends on residues Asp323 and His356. Asp357 lines the substrate pocket.

This sequence belongs to the AB hydrolase superfamily. MetX family. Homodimer.

The protein localises to the cytoplasm. It carries out the reaction L-homoserine + succinyl-CoA = O-succinyl-L-homoserine + CoA. It participates in amino-acid biosynthesis; L-methionine biosynthesis via de novo pathway; O-succinyl-L-homoserine from L-homoserine: step 1/1. Its function is as follows. Transfers a succinyl group from succinyl-CoA to L-homoserine, forming succinyl-L-homoserine. The polypeptide is Homoserine O-succinyltransferase (Pseudomonas entomophila (strain L48)).